Reading from the N-terminus, the 376-residue chain is N-glycosylase/DNA lyase (376 aa).

Positions 134, 139, and 189 each coordinate DNA. Residue Lys241 is the Schiff-base intermediate with DNA of the active site. 8-oxoguanine contacts are provided by Pro258 and Asp260. His262 is a DNA binding site. 8-oxoguanine contacts are provided by Gln320 and Phe324.

Belongs to the type-1 OGG1 family.

The protein resides in the nucleus. The enzyme catalyses 2'-deoxyribonucleotide-(2'-deoxyribose 5'-phosphate)-2'-deoxyribonucleotide-DNA = a 3'-end 2'-deoxyribonucleotide-(2,3-dehydro-2,3-deoxyribose 5'-phosphate)-DNA + a 5'-end 5'-phospho-2'-deoxyribonucleoside-DNA + H(+). Functionally, DNA repair enzyme that incises DNA at 8-oxoG residues. Excises 7,8-dihydro-8-oxoguanine and 2,6-diamino-4-hydroxy-5-N-methylformamidopyrimidine (FAPY) from damaged DNA. Has a beta-lyase activity that nicks DNA 3' to the lesion. The chain is N-glycosylase/DNA lyase (OGG1) from Saccharomyces cerevisiae (strain ATCC 204508 / S288c) (Baker's yeast).